Here is a 2067-residue protein sequence, read N- to C-terminus: Dedicator of cytokinesis protein 11 (2067 aa).

The PH domain maps to 162 to 269 (GVMKQGWLQK…WVNTIKQALL (108 aa)). The disordered stretch occupies residues 274-302 (DRRNGSETSEGSLDDDSSSQGKPESITES). Over residues 291–302 (SSQGKPESITES) the composition is skewed to polar residues. The C2 DOCK-type domain occupies 643–820 (NNHLYIYPQQ…PLFKVRAYVA (178 aa)). A disordered region spans residues 1224 to 1267 (SSTIVDKEPSGSVTQNGLSRRGESRGSMYGDPGTPDINELHRRG). Residues 1614 to 2040 (RSYASTPELR…LSEIIHEQIF (427 aa)) form the DOCKER domain.

This sequence belongs to the DOCK family.

Its function is as follows. Guanine nucleotide-exchange factor (GEF) that activates CDC42 by exchanging bound GDP for free GTP. This chain is Dedicator of cytokinesis protein 11, found in Danio rerio (Zebrafish).